We begin with the raw amino-acid sequence, 297 residues long: Homeobox protein HMX3 (297 aa).

Disordered stretches follow at residues 24–43 (NSDS…KAGL) and 96–172 (AAQK…RKKK). Basic and acidic residues-rich tracts occupy residues 109–123 (TDRD…SDPD) and 145–166 (EDGK…ADKK). The segment at residues 170–229 (KKKTRTVFSRSQVFQLESTFDMKRYLSSSERAGLAASLHLTETQVKIWFQNRRNKWKRQL) is a DNA-binding region (homeobox).

It belongs to the HMX homeobox family. As to expression, expressed in the ear placode and vesicle and in cells forming the vestibulo-acoustic ganglion. Also expressed in the lateral line.

It is found in the nucleus. Transcription factor involved in specification of neuronal cell types and which is required for inner ear and hypothalamus development. Binds to the 5'-CAAGTG-3' core sequence. In Danio rerio (Zebrafish), this protein is Homeobox protein HMX3 (hmx3).